A 198-amino-acid polypeptide reads, in one-letter code: Ribonuclease 3-like protein 1 (198 aa).

Residues 85–110 show a composition bias toward basic and acidic residues; it reads KKLAPKPDEEHTTTTKPISKDDESKT. The tract at residues 85–115 is disordered; the sequence is KKLAPKPDEEHTTTTKPISKDDESKTRRGSA. The region spanning 114-191 is the DRBM domain; that stretch reads SAKSVLHEMC…AEGALWYLEH (78 aa).

The polypeptide is Ribonuclease 3-like protein 1 (RTL1) (Arabidopsis thaliana (Mouse-ear cress)).